Here is an 841-residue protein sequence, read N- to C-terminus: Protein translocase subunit SecA (841 aa).

Residues glutamine 85, 103–107 (GEGKT), and aspartate 492 each bind ATP. Positions 788–841 (EVVQGQTTAHQPQEGDEEKTVKKKPVRKVVDIGRNSPCHCGSGKKYKNCHGKTE) are disordered. Zn(2+) contacts are provided by cysteine 825, cysteine 827, cysteine 836, and histidine 837. A compositionally biased stretch (basic residues) spans 829–841 (SGKKYKNCHGKTE).

This sequence belongs to the SecA family. Monomer and homodimer. Part of the essential Sec protein translocation apparatus which comprises SecA, SecYEG and auxiliary proteins SecDF. Other proteins may also be involved. Zn(2+) serves as cofactor.

It is found in the cell membrane. Its subcellular location is the cytoplasm. It catalyses the reaction ATP + H2O + cellular proteinSide 1 = ADP + phosphate + cellular proteinSide 2.. In terms of biological role, part of the Sec protein translocase complex. Interacts with the SecYEG preprotein conducting channel. Has a central role in coupling the hydrolysis of ATP to the transfer of proteins into and across the cell membrane, serving as an ATP-driven molecular motor driving the stepwise translocation of polypeptide chains across the membrane. In Bacillus pumilus (strain SAFR-032), this protein is Protein translocase subunit SecA.